A 413-amino-acid chain; its full sequence is Arginine biosynthesis bifunctional protein ArgJ (413 aa).

Substrate is bound by residues T160, K186, T197, E277, N408, and T413. T197 (nucleophile) is an active-site residue.

Belongs to the ArgJ family. In terms of assembly, heterotetramer of two alpha and two beta chains.

The protein localises to the cytoplasm. It catalyses the reaction N(2)-acetyl-L-ornithine + L-glutamate = N-acetyl-L-glutamate + L-ornithine. It carries out the reaction L-glutamate + acetyl-CoA = N-acetyl-L-glutamate + CoA + H(+). It functions in the pathway amino-acid biosynthesis; L-arginine biosynthesis; L-ornithine and N-acetyl-L-glutamate from L-glutamate and N(2)-acetyl-L-ornithine (cyclic): step 1/1. Its pathway is amino-acid biosynthesis; L-arginine biosynthesis; N(2)-acetyl-L-ornithine from L-glutamate: step 1/4. Catalyzes two activities which are involved in the cyclic version of arginine biosynthesis: the synthesis of N-acetylglutamate from glutamate and acetyl-CoA as the acetyl donor, and of ornithine by transacetylation between N(2)-acetylornithine and glutamate. This chain is Arginine biosynthesis bifunctional protein ArgJ, found in Prochlorococcus marinus (strain SARG / CCMP1375 / SS120).